The primary structure comprises 96 residues: Large ribosomal subunit protein eL43 (96 aa).

The C4-type zinc-finger motif lies at 41-62; the sequence is CPVCGFMKLKRISTSIWECKKC.

It belongs to the eukaryotic ribosomal protein eL43 family. Zn(2+) serves as cofactor.

This Methanococcus aeolicus (strain ATCC BAA-1280 / DSM 17508 / OCM 812 / Nankai-3) protein is Large ribosomal subunit protein eL43.